The primary structure comprises 64 residues: Large ribosomal subunit protein bL33 (64 aa).

The segment covering 16 to 25 has biased composition (basic and acidic residues); the sequence is EARTSSEPRR. Residues 16 to 39 form a disordered region; that stretch reads EARTSSEPRRSNGISRYTTEKNKR.

It belongs to the bacterial ribosomal protein bL33 family.

In Prochlorococcus marinus (strain MIT 9515), this protein is Large ribosomal subunit protein bL33.